We begin with the raw amino-acid sequence, 1033 residues long: PDZ domain-containing protein 7 (1033 aa).

2 consecutive PDZ domains span residues Ser-86 to Arg-168 and Ile-210 to Arg-293. Residues Glu-323–Ser-344 are compositionally biased toward low complexity. Disordered stretches follow at residues Glu-323–Val-380, Lys-444–Ser-464, Glu-754–Thr-864, and Met-943–Pro-1033. Over residues Ala-770–Ser-784 the composition is skewed to basic residues. The segment covering Ser-785–Pro-797 has biased composition (low complexity). Positions Thr-862–Ala-934 constitute a PDZ 3 domain. The span at Pro-991–Pro-1000 shows a compositional bias: pro residues.

In terms of assembly, homodimerizes (via PDZ2 domain). Component of USH2 complex, composed of ADGRV1, PDZD7, USH2A and WHRN. Interacts (via PDZ domains) with WHRN; the interaction is direct. Interacts with USH1G. Interacts with ADGRV1 (via the cytoplasmic region). Interacts with USH2A (via the cytoplasmic region). Interacts with MYO7A (via MyTH4-FERM domains). In terms of tissue distribution, weakly expressed in the inner ear. Expressed in the retinal pigment epithelium.

It is found in the cell projection. Its subcellular location is the cilium. The protein localises to the nucleus. It localises to the stereocilium. In terms of biological role, in cochlear developing hair cells, essential in organizing the USH2 complex at stereocilia ankle links. Blocks inhibition of adenylate cyclase activity mediated by ADGRV1. The polypeptide is PDZ domain-containing protein 7 (Homo sapiens (Human)).